A 172-amino-acid chain; its full sequence is Probable tryptophan transport protein (172 aa).

Transmembrane regions (helical) follow at residues 7–29, 49–71, 104–126, and 136–158; these read VIMA…FLGG, VQNV…AFPA, AVLT…LLIV, and FAAV…YPIV.

The protein belongs to the vitamin uptake transporter (VUT/ECF) (TC 2.A.88) family. TrpP subfamily.

Its subcellular location is the cell membrane. Its function is as follows. Probably involved in tryptophan uptake. The sequence is that of Probable tryptophan transport protein (trpP) from Bacillus subtilis (strain 168).